Consider the following 700-residue polypeptide: Chaperonin CPN60, mitochondrial (700 aa).

Residues 1–9 (MRMKRIHIL) constitute a mitochondrion transit peptide. Residues 636–700 (TYKHKLHDDE…SMNDEYNYDE (65 aa)) form a disordered region. The span at 644–700 (DEDTDEDDEEDEDDEDDEDDLDDDDYDDEDEEDEEDEEDEDDEDDEDSMNDEYNYDE) shows a compositional bias: acidic residues.

It belongs to the chaperonin (HSP60) family.

It localises to the mitochondrion matrix. Implicated in mitochondrial protein import and macromolecular assembly. May facilitate the correct folding of imported proteins. May also prevent misfolding and promote the refolding and proper assembly of unfolded polypeptides generated under stress conditions in the mitochondrial matrix. The polypeptide is Chaperonin CPN60, mitochondrial (Plasmodium falciparum (isolate FCR-3 / Gambia)).